The following is a 340-amino-acid chain: Glyceraldehyde-3-phosphate dehydrogenase (340 aa).

Residues 11-12 (TI) and glycine 109 contribute to the NAD(+) site. Residue 138 to 140 (SCN) coordinates D-glyceraldehyde 3-phosphate. Cysteine 139 (nucleophile) is an active-site residue. Arginine 167 is an NAD(+) binding site. D-glyceraldehyde 3-phosphate is bound at residue 193-194 (HA). An NAD(+)-binding site is contributed by glutamine 300.

Belongs to the glyceraldehyde-3-phosphate dehydrogenase family. As to quaternary structure, homotetramer.

Its subcellular location is the cytoplasm. It carries out the reaction D-glyceraldehyde 3-phosphate + phosphate + NADP(+) = (2R)-3-phospho-glyceroyl phosphate + NADPH + H(+). It catalyses the reaction D-glyceraldehyde 3-phosphate + phosphate + NAD(+) = (2R)-3-phospho-glyceroyl phosphate + NADH + H(+). Its pathway is carbohydrate degradation; glycolysis; pyruvate from D-glyceraldehyde 3-phosphate: step 1/5. This chain is Glyceraldehyde-3-phosphate dehydrogenase, found in Saccharolobus islandicus (strain Y.N.15.51 / Yellowstone #2) (Sulfolobus islandicus).